The following is a 139-amino-acid chain: Low molecular weight protein-tyrosine-phosphatase PtpB (139 aa).

Cysteine 7 serves as the catalytic Nucleophile. Arginine 13 is a catalytic residue. The Proton donor role is filled by aspartate 111.

This sequence belongs to the low molecular weight phosphotyrosine protein phosphatase family.

It catalyses the reaction O-phospho-L-tyrosyl-[protein] + H2O = L-tyrosyl-[protein] + phosphate. In terms of biological role, dephosphorylates the phosphotyrosine-containing proteins. The polypeptide is Low molecular weight protein-tyrosine-phosphatase PtpB (ptpB) (Staphylococcus epidermidis (strain ATCC 35984 / DSM 28319 / BCRC 17069 / CCUG 31568 / BM 3577 / RP62A)).